The primary structure comprises 113 residues: Class I hydrophobin POH1 (113 aa).

The signal sequence occupies residues 1 to 26 (MFSIRISTVVLAASALLAVAIPMTNT). Cystine bridges form between C31-C93, C38-C87, C39-C74, and C94-C107.

It belongs to the fungal hydrophobin family. In terms of assembly, self-assembles to form functional amyloid fibrils called rodlets. Self-assembly into fibrillar rodlets occurs spontaneously at hydrophobic:hydrophilic interfaces and the rodlets further associate laterally to form amphipathic monolayers. In terms of tissue distribution, expressed in the fruiting bodies but not in vegetative mycelium.

The protein resides in the secreted. It localises to the cell wall. In terms of biological role, aerial growth, conidiation, and dispersal of filamentous fungi in the environment rely upon a capability of their secreting small amphipathic proteins called hydrophobins (HPBs) with low sequence identity. Class I can self-assemble into an outermost layer of rodlet bundles on aerial cell surfaces, conferring cellular hydrophobicity that supports fungal growth, development and dispersal; whereas Class II form highly ordered films at water-air interfaces through intermolecular interactions but contribute nothing to the rodlet structure. POH1 is a class I hydrophobin that is involved in the formation of mycelium knots and subsequent fruiting bodies. This Pleurotus ostreatus (Oyster mushroom) protein is Class I hydrophobin POH1.